Here is a 131-residue protein sequence, read N- to C-terminus: Large ribosomal subunit protein uL18 (131 aa).

The protein belongs to the universal ribosomal protein uL18 family. In terms of assembly, part of the 50S ribosomal subunit; part of the 5S rRNA/L5/L18/L25 subcomplex. Contacts the 5S and 23S rRNAs.

Its function is as follows. This is one of the proteins that bind and probably mediate the attachment of the 5S RNA into the large ribosomal subunit, where it forms part of the central protuberance. The protein is Large ribosomal subunit protein uL18 of Corynebacterium kroppenstedtii (strain DSM 44385 / JCM 11950 / CIP 105744 / CCUG 35717).